The primary structure comprises 473 residues: Cysteine--tRNA ligase (473 aa).

Cysteine 29 is a binding site for Zn(2+). The short motif at 31 to 41 (ATVQSAPHIGH) is the 'HIGH' region element. Residues cysteine 207, histidine 232, and glutamate 236 each coordinate Zn(2+). The 'KMSKS' region signature appears at 263 to 267 (KMSKS). Lysine 266 is a binding site for ATP.

This sequence belongs to the class-I aminoacyl-tRNA synthetase family. Monomer. Zn(2+) serves as cofactor.

It localises to the cytoplasm. The enzyme catalyses tRNA(Cys) + L-cysteine + ATP = L-cysteinyl-tRNA(Cys) + AMP + diphosphate. This chain is Cysteine--tRNA ligase, found in Corynebacterium kroppenstedtii (strain DSM 44385 / JCM 11950 / CIP 105744 / CCUG 35717).